A 288-amino-acid chain; its full sequence is 4-diphosphocytidyl-2-C-methyl-D-erythritol kinase (288 aa).

Lys8 is a catalytic residue. 90–100 (PFGAGLGGGSS) lines the ATP pocket. Asp132 is a catalytic residue.

Belongs to the GHMP kinase family. IspE subfamily.

The catalysed reaction is 4-CDP-2-C-methyl-D-erythritol + ATP = 4-CDP-2-C-methyl-D-erythritol 2-phosphate + ADP + H(+). Its pathway is isoprenoid biosynthesis; isopentenyl diphosphate biosynthesis via DXP pathway; isopentenyl diphosphate from 1-deoxy-D-xylulose 5-phosphate: step 3/6. In terms of biological role, catalyzes the phosphorylation of the position 2 hydroxy group of 4-diphosphocytidyl-2C-methyl-D-erythritol. The protein is 4-diphosphocytidyl-2-C-methyl-D-erythritol kinase of Chlorobium chlorochromatii (strain CaD3).